An 861-amino-acid polypeptide reads, in one-letter code: Rod cGMP-specific 3',5'-cyclic phosphodiesterase subunit alpha (861 aa).

Gly2 carries the N-acetylglycine modification. GAF domains follow at residues 73-222 (QAER…NLIM) and 254-431 (DIER…GWSV). The PDEase domain maps to 483-816 (EEEELAEILQ…KEWKALADEY (334 aa)). His559 (proton donor) is an active-site residue. Positions 563, 599, 600, and 720 each coordinate a divalent metal cation. Residues 821-861 (KALEEEKQKQQTAKQGAAGDQPGGNPSPAGGAPASKSCCIQ) form a disordered region. Residues 830-861 (QQTAKQGAAGDQPGGNPSPAGGAPASKSCCIQ) show a composition bias toward low complexity. Cys858 bears the Cysteine methyl ester mark. The S-farnesyl cysteine moiety is linked to residue Cys858. The propeptide at 859–861 (CIQ) is removed in mature form.

It belongs to the cyclic nucleotide phosphodiesterase family. Oligomer composed of two catalytic chains (alpha and beta), an inhibitory chain (gamma) and the delta chain. Requires a divalent metal cation as cofactor.

It localises to the cell membrane. The protein localises to the cell projection. The protein resides in the cilium. Its subcellular location is the photoreceptor outer segment. It carries out the reaction 3',5'-cyclic GMP + H2O = GMP + H(+). Functionally, rod-specific cGMP phosphodiesterase that catalyzes the hydrolysis of 3',5'-cyclic GMP. This protein participates in processes of transmission and amplification of the visual signal. The protein is Rod cGMP-specific 3',5'-cyclic phosphodiesterase subunit alpha of Canis lupus familiaris (Dog).